The primary structure comprises 436 residues: Magnesium transporter MRS2-B (436 aa).

2 stretches are compositionally biased toward low complexity: residues 1–14 and 29–54; these read MSAA…GDSA and VASV…FPGG. The tract at residues 1–60 is disordered; that stretch reads MSAAAASSAAGDSAKQPLLHHQRGNPPHVASVSSPSLPSAPPGALAGGRRFPGGLDVPNL. Residues 176 to 242 adopt a coiled-coil conformation; it reads LALEAACSFL…RDEIEQLMDD (67 aa). The next 2 membrane-spanning stretches (helical) occupy residues 372-392 and 408-428; these read LLLT…GIFG and WVLI…LWFF. Residues 392–394 carry the Required for magnesium transport activity motif; sequence GMN.

It belongs to the CorA metal ion transporter (MIT) (TC 1.A.35.5) family.

It localises to the membrane. Its function is as follows. Magnesium transporter that may mediate the influx of magnesium. This chain is Magnesium transporter MRS2-B (MRS2-B), found in Oryza sativa subsp. indica (Rice).